Reading from the N-terminus, the 267-residue chain is Chlorophyll a-b binding protein 3A, chloroplastic (267 aa).

The transit peptide at 1-34 (MAASTMALSSSTFAGKTVKLAPSSSEITGNGRIT) directs the protein to the chloroplast. A helical membrane pass occupies residues 153–173 (LVHAQSILAIWACQVVLMGAV). Chlorophyll b contacts are provided by V154, S158, Q166, E174, R177, and L183. The chlorophyll a site is built by K214, E215, N218, R220, Q232, H247, and A256. A helical membrane pass occupies residues 221 to 241 (LAMFSMFGFFVQAIVTGKGPL). Chlorophyll b is bound at residue F263.

This sequence belongs to the light-harvesting chlorophyll a/b-binding (LHC) protein family. In terms of assembly, the LHC complex consists of chlorophyll a-b binding proteins. Binds at least 14 chlorophylls (8 Chl-a and 6 Chl-b) and carotenoids such as lutein and neoxanthin. is required as a cofactor. In terms of processing, photoregulated by reversible phosphorylation of its threonine residues.

It is found in the plastid. The protein localises to the chloroplast thylakoid membrane. Its function is as follows. The light-harvesting complex (LHC) functions as a light receptor, it captures and delivers excitation energy to photosystems with which it is closely associated. This Solanum lycopersicum (Tomato) protein is Chlorophyll a-b binding protein 3A, chloroplastic (CAB3A).